A 203-amino-acid polypeptide reads, in one-letter code: Dephospho-CoA kinase (203 aa).

Positions 4 to 201 (IIGLTGGIGS…RKYLMLARKH (198 aa)) constitute a DPCK domain. ATP is bound at residue 12–17 (GSGKTR).

The protein belongs to the CoaE family.

Its subcellular location is the cytoplasm. It carries out the reaction 3'-dephospho-CoA + ATP = ADP + CoA + H(+). Its pathway is cofactor biosynthesis; coenzyme A biosynthesis; CoA from (R)-pantothenate: step 5/5. Catalyzes the phosphorylation of the 3'-hydroxyl group of dephosphocoenzyme A to form coenzyme A. This is Dephospho-CoA kinase from Nitrosomonas europaea (strain ATCC 19718 / CIP 103999 / KCTC 2705 / NBRC 14298).